A 333-amino-acid chain; its full sequence is Thiamine-monophosphate kinase (333 aa).

Positions 44, 58, 59, and 60 each coordinate Mg(2+). Histidine 67 is a binding site for substrate. Mg(2+) contacts are provided by aspartate 89 and aspartate 137. Residues 136 to 137 (GD) and arginine 162 contribute to the ATP site. Residue aspartate 224 participates in Mg(2+) binding. Serine 226 lines the ATP pocket. Aspartate 227 contacts Mg(2+). Glutamate 278 and tryptophan 320 together coordinate substrate.

The protein belongs to the thiamine-monophosphate kinase family.

It carries out the reaction thiamine phosphate + ATP = thiamine diphosphate + ADP. It participates in cofactor biosynthesis; thiamine diphosphate biosynthesis; thiamine diphosphate from thiamine phosphate: step 1/1. In terms of biological role, catalyzes the ATP-dependent phosphorylation of thiamine-monophosphate (TMP) to form thiamine-pyrophosphate (TPP), the active form of vitamin B1. The sequence is that of Thiamine-monophosphate kinase from Mycobacterium tuberculosis (strain CDC 1551 / Oshkosh).